We begin with the raw amino-acid sequence, 185 residues long: MRIFGYARVSTSQQSLDIQIRALKDAGVKANRIFTDKASGSSTDREGLDLLRMKVEEGDVILVKKLDRLGRDTADMIQLIKEFDAQGVAVRFIDDGISTDGDMGQMVVTILSAVAQAERRRILERTNEGRQEAKLKGIKFGRRRTVDRNVVLTLHQKGTGATEIAHQLSIARSTVYKILEDERAS.

The Resolvase/invertase-type recombinase catalytic domain maps to 2–137 (RIFGYARVST…EGRQEAKLKG (136 aa)). Serine 10 serves as the catalytic O-(5'-phospho-DNA)-serine intermediate. Residues 161–180 (ATEIAHQLSIARSTVYKILE) constitute a DNA-binding region (H-T-H motif).

It belongs to the site-specific recombinase resolvase family.

Its function is as follows. Resolvase catalyzes the resolution (a site-specific recombination) of the cointegrated replicon to yield the final transposition products. The polypeptide is Transposon Tn3 resolvase (tnpR) (Escherichia coli).